A 163-amino-acid polypeptide reads, in one-letter code: Putative pre-16S rRNA nuclease (163 aa).

The protein belongs to the YqgF nuclease family.

The protein resides in the cytoplasm. Its function is as follows. Could be a nuclease involved in processing of the 5'-end of pre-16S rRNA. The sequence is that of Putative pre-16S rRNA nuclease from Rhodopseudomonas palustris (strain BisA53).